The sequence spans 115 residues: Glutaredoxin-like protein C5orf63 homolog (115 aa).

Cys-40 and Cys-43 form a disulfide bridge.

This sequence belongs to the glutaredoxin family. YDR286C subfamily.

The polypeptide is Glutaredoxin-like protein C5orf63 homolog (Mus musculus (Mouse)).